Reading from the N-terminus, the 391-residue chain is PPE family protein PPE15 (391 aa).

Positions 312-367 (LGEATLVGRLSVPAAWSTAAPATTAGATALEGSGWTVAAEEAGPVTGMMPGMASAA) are eukaryotic-like SH3 domain.

It belongs to the mycobacterial PPE family. In terms of assembly, forms a heterodimer with PE8. The dimer forms a 1:1:1 heterotrimeric complex with EspG5. PPE15 interacts directly with EspG5. Interacts via the C-terminal region with host Toll-like receptor 4 (TLR4). Interacts, also via the C-terminal region, with two cytosolic subunits of the host NOX complex, p47phox (NCF1) and p67phox (NCF2).

The protein resides in the secreted. It localises to the host mitochondrion. In terms of biological role, may play a critical role in the homeostasis of triacylglycerol-containing lipid droplets in M.tuberculosis and influence the entry of the pathogen into a dormant state. Is recognized by host TLR4 receptor at the macrophage cell surface, which modulates the host immune response, induces mitochondrial stress and perturbations, and induces macrophage apoptosis leading to pathogen persistence. Also downregulates NOX-mediated reactive oxygen species (ROS) generation in THP1 macrophages, which increases intracellular survival of bacteria. PPE15 interacts with two subunits of the host NADPH oxidase (NOX) complex in the cytosol of macrophages and prevents their migration to the membrane, which inhibits the assembly of the NOX complex at the plasma membrane of THP1 macrophages. This leads to reduced NOX activity and diminished ROS generation. The polypeptide is PPE family protein PPE15 (PPE15) (Mycobacterium tuberculosis (strain CDC 1551 / Oshkosh)).